The following is a 527-amino-acid chain: Proline--tRNA ligase (527 aa).

The protein belongs to the class-II aminoacyl-tRNA synthetase family. ProS type 3 subfamily. Homodimer.

The protein localises to the cytoplasm. The catalysed reaction is tRNA(Pro) + L-proline + ATP = L-prolyl-tRNA(Pro) + AMP + diphosphate. In terms of biological role, catalyzes the attachment of proline to tRNA(Pro) in a two-step reaction: proline is first activated by ATP to form Pro-AMP and then transferred to the acceptor end of tRNA(Pro). The sequence is that of Proline--tRNA ligase from Sphingopyxis alaskensis (strain DSM 13593 / LMG 18877 / RB2256) (Sphingomonas alaskensis).